Here is a 377-residue protein sequence, read N- to C-terminus: Opsin, blue-sensitive (377 aa).

Residues 1–56 (MLLHNKTLAGKALAFIAEEGYVPSMREKFLGWNVPPEYSDLVHPHWRAFPAPGKHF) lie on the Extracellular side of the membrane. N-linked (GlcNAc...) asparagine glycosylation occurs at Asn-5. The chain crosses the membrane as a helical span at residues 57–81 (HIGLAIIYSMLLIMSLVGNCCVIWI). Over 82-93 (FSTSKSLRTPSN) the chain is Cytoplasmic. A helical transmembrane segment spans residues 94–119 (MFIVSLAIFDIIMAFEMPMLVISSFM). Over 120-132 (ERMIGWEIGCDVY) the chain is Extracellular. Residues Cys-129 and Cys-206 are joined by a disulfide bond. Residues 133–152 (SVFGSISGMGQAMTNAAIAF) form a helical membrane-spanning segment. Residues 153–170 (DRYRTISCPIDGRLNSKQ) are Cytoplasmic-facing. Residues 171 to 195 (AAVIIAFTWFWVTPFTVLPLLKVWG) form a helical membrane-spanning segment. Residues 196–219 (RYTTEGFLTTCSFDFLTDDEDTKV) are Extracellular-facing. The helical transmembrane segment at 220–247 (FVTCIFIWAYVIPLIFIILFYSRLLSSI) threads the bilayer. The Cytoplasmic segment spans residues 248–282 (RNHEKMLREQAKKMNVKSLVSNQDKERSAEVRIAK). The chain crosses the membrane as a helical span at residues 283–306 (VAFTIFFLFLLAWTPYATVALIGV). The Extracellular segment spans residues 307 to 314 (YGNRELLT). The helical transmembrane segment at 315 to 339 (PVSTMLPAVFAKTVSCIDPWIYAIN) threads the bilayer. Lys-326 carries the N6-(retinylidene)lysine modification. Topologically, residues 340 to 377 (HPRYRQELQKRCKWMGIHEPETTSDATSAQTEKIKTDE) are cytoplasmic.

The protein belongs to the G-protein coupled receptor 1 family. Opsin subfamily. Phosphorylated on some or all of the serine and threonine residues present in the C-terminal region. As to expression, expressed in the dorsal region of the retina and sparsely expressed in the ventral region.

It localises to the membrane. Its function is as follows. Visual pigments are the light-absorbing molecules that mediate vision. They consist of an apoprotein, opsin, covalently linked to 11-cis-retinal. The polypeptide is Opsin, blue-sensitive (BLOP) (Apis mellifera (Honeybee)).